The primary structure comprises 366 residues: Phospho-N-acetylmuramoyl-pentapeptide-transferase (366 aa).

10 helical membrane-spanning segments follow: residues 27–47 (AALFTSALIVFLFGPAIISSL), 71–91 (TPTMGGLMILAGIVGSALLWA), 93–113 (LSSIYVVSTLLVTLGFGAIGF), 134–154 (LGIEFVIAAIAVFFMMQAAQS), 174–194 (LMLNLGYFFVLFGGFVIVGAG), 205–225 (GLAIVPVMIASAAFGLIAYLA), 245–265 (LAVILGAVIGAGLGFLWFNAP), 268–288 (AIFMGDTGSLALGGLIGTVAV), 297–317 (VIIGGLFVIETLSVIIQVFWF), and 343–363 (QVVIRFWIIAVILAMVGLSTL).

The protein belongs to the glycosyltransferase 4 family. MraY subfamily. Mg(2+) is required as a cofactor.

The protein localises to the cell inner membrane. The catalysed reaction is UDP-N-acetyl-alpha-D-muramoyl-L-alanyl-gamma-D-glutamyl-meso-2,6-diaminopimeloyl-D-alanyl-D-alanine + di-trans,octa-cis-undecaprenyl phosphate = di-trans,octa-cis-undecaprenyl diphospho-N-acetyl-alpha-D-muramoyl-L-alanyl-D-glutamyl-meso-2,6-diaminopimeloyl-D-alanyl-D-alanine + UMP. It functions in the pathway cell wall biogenesis; peptidoglycan biosynthesis. Its function is as follows. Catalyzes the initial step of the lipid cycle reactions in the biosynthesis of the cell wall peptidoglycan: transfers peptidoglycan precursor phospho-MurNAc-pentapeptide from UDP-MurNAc-pentapeptide onto the lipid carrier undecaprenyl phosphate, yielding undecaprenyl-pyrophosphoryl-MurNAc-pentapeptide, known as lipid I. The chain is Phospho-N-acetylmuramoyl-pentapeptide-transferase from Sinorhizobium fredii (strain NBRC 101917 / NGR234).